The following is a 137-amino-acid chain: Cofilin-1A (137 aa).

The 134-residue stretch at 2–135 folds into the ADF-H domain; that stretch reads SSGIALAPNC…KDSCFYEKCT (134 aa).

It belongs to the actin-binding proteins ADF family.

The protein localises to the nucleus matrix. It is found in the cytoplasm. The protein resides in the cytoskeleton. Its function is as follows. Controls reversibly actin polymerization and depolymerization in a pH-sensitive manner. It has the ability to bind G- and F-actin in a 1:1 ratio of cofilin to actin. It is the major component of intranuclear and cytoplasmic actin rods. This is Cofilin-1A (cofA) from Dictyostelium discoideum (Social amoeba).